A 356-amino-acid chain; its full sequence is Probable scoulerine-9-O-methyltransferase OMT2B (356 aa).

Residue methionine 173 participates in S-adenosyl-L-methionine binding. A substrate-binding site is contributed by aspartate 176. S-adenosyl-L-methionine contacts are provided by residues threonine 177, glycine 202, aspartate 225, 245–246, and lysine 259; that span reads DI. A substrate-binding site is contributed by 260–264; it reads YVLHN. Histidine 263 functions as the Proton acceptor in the catalytic mechanism.

It belongs to the class I-like SAM-binding methyltransferase superfamily. Cation-independent O-methyltransferase family. COMT subfamily.

It carries out the reaction (S)-scoulerine + S-adenosyl-L-methionine = (S)-tetrahydrocolumbamine + S-adenosyl-L-homocysteine + H(+). The protein operates within alkaloid biosynthesis. In terms of biological role, methyltransferase involved in the biosynthesis of the benzylisoquinoline alkaloid noscapine. Catalyzes the conversion of (S)-scoulerine to (S)-tetrahydrocolumbamine. The heterodimers OMT2B-SOMT3 and OMT2B-6OMT do not possess 3-O-acetyl-4'-O-demethylpapaveroxine 4'-O-methyltransferase activity. The chain is Probable scoulerine-9-O-methyltransferase OMT2B from Papaver somniferum (Opium poppy).